A 626-amino-acid chain; its full sequence is Receptor-like protein 4 (626 aa).

The first 22 residues, 1-22 (MMLRFILASLLLSSFSLYSSLA), serve as a signal peptide directing secretion. Residues 23–549 (RPAPYALRIS…CGPHLSSGAK (527 aa)) lie on the Extracellular side of the membrane. Residues N61, N282, N333, and N417 are each glycosylated (N-linked (GlcNAc...) asparagine). LRR repeat units lie at residues 420–444 (RWFI…ISKL), 445–468 (KHLQ…LGSV), 470–492 (SLEV…LGEL), and 493–516 (TSLR…VGGR). Residues N451 and N482 are each glycosylated (N-linked (GlcNAc...) asparagine). The N-linked (GlcNAc...) asparagine glycan is linked to N524. A helical membrane pass occupies residues 550 to 570 (IGIAFGVSLAFLLIVACAMIW). Over 571-626 (WKRRQNILRAQQIAARGAPYAKKRTHVSHDIQMSRHGHNNHGQARTAVENGPSLLS) the chain is Cytoplasmic. The interval 603–626 (MSRHGHNNHGQARTAVENGPSLLS) is disordered.

It belongs to the RLP family.

Its subcellular location is the cell membrane. The protein is Receptor-like protein 4 of Arabidopsis thaliana (Mouse-ear cress).